A 1191-amino-acid chain; its full sequence is Solute carrier family 12 member 2 (1191 aa).

Residues 1 to 166 are disordered; it reads MEPAFPASSA…MSEGSLHSSG (166 aa). Residues 1–258 are Cytoplasmic-facing; the sequence is MEPAFPASSA…ADNKGVVKFG (258 aa). Low complexity-rich tracts occupy residues 13 to 25, 59 to 69, 80 to 99, and 131 to 141; these read QSQS…AGQQ, KGQTAAQPAAA, AAAP…AAAA, and SASSAHGGHQP. Residues 142–155 show a composition bias toward polar residues; the sequence is PSESMNGYPQNGDT. Residues Thr-175, Thr-179, and Thr-184 each carry the phosphothreonine; by OXSR1 and STK39 modification. Phosphothreonine occurs at positions 189 and 202. The discontinuously helical transmembrane segment at 259–288 threads the bilayer; the sequence is WIKGVLVRCMLNIWGVMLFIRLSWIVGHAG. Leu-269 is a binding site for Na(+). Residues Asn-270 and Ile-271 each contribute to the K(+) site. Trp-272 provides a ligand contact to Na(+). Residues Gly-273, Val-274, and Met-275 each contribute to the chloride site. A helical membrane pass occupies residues 289–308; that stretch reads IGLALLVIGTATVVTTITGL. Residues 309–339 lie on the Cytoplasmic side of the membrane; that stretch reads STSAITTNGFVRGGGAYYLISRSLGPEFGGA. A helical membrane pass occupies residues 340 to 367; it reads IGLIFAFANAVAVAMYVVGFAETVRDLL. Residue Phe-344 coordinates chloride. A K(+)-binding site is contributed by Tyr-355. Topologically, residues 368 to 377 are extracellular; sequence VEHNALMIDE. A helical transmembrane segment spans residues 378–401; the sequence is MSDIRIIGSVTIVVLFGISVAGME. The Cytoplasmic segment spans residues 402-404; that stretch reads WEA. The helical transmembrane segment at 405–426 threads the bilayer; that stretch reads KAQIVLLGILLLAIVNFTVGTF. At 427-458 the chain is on the extracellular side; that stretch reads IPANDKRAKGFFNYRGEIFSENFVPDFRDGED. Residues 459–476 traverse the membrane as a discontinuously helical segment; sequence FFSVFAIFFPAATGILAG. Residues Pro-468, Ala-469, and Thr-471 each coordinate K(+). The chloride site is built by Pro-468 and Ala-469. Chloride-binding residues include Gly-472 and Ile-473. Residues 477–491 are Cytoplasmic-facing; that stretch reads ANISGDLADPQLAIP. A helical membrane pass occupies residues 492-513; it reads KGTLLAILITTIVYAGAAVSVG. Residues 514 to 571 lie on the Extracellular side of the membrane; the sequence is SCIVREATGNLTDAIIPGTVTNCTNVACKLGFNFSSCATNKCSYGLMNDFQVMSLVSG. Asn-523 and Asn-535 each carry an N-linked (GlcNAc...) asparagine glycan. A disulfide bridge links Cys-536 with Cys-541. A glycan (N-linked (GlcNAc...) asparagine) is linked at Asn-546. An intrachain disulfide couples Cys-550 to Cys-555. Residues 572-596 form a helical membrane-spanning segment; that stretch reads FGPLITAGIFSATLSSALASLVSAP. Residues Ala-583, Ser-586, and Ser-587 each coordinate Na(+). Residues 597–624 are Cytoplasmic-facing; sequence KIFQALCKDNIYPGLHVFSVGYGKNNEP. Helical transmembrane passes span 625–645 and 646–664; these read LRGY…AELN and VIAP…LINF. 2 residues coordinate chloride: Phe-655 and Tyr-659. Residues 665–687 are Cytoplasmic-facing; the sequence is SVFHASLAKSPGWRPAFRFYNMW. The next 2 membrane-spanning stretches (helical) occupy residues 688–705 and 706–718; these read ISLI…VINW and WAAL…VLAL. Residues 719 to 1191 are Cytoplasmic-facing; sequence YIYVTYKKPD…NHQSVLTFYS (473 aa). Positions 734-751 are scissor helix; that stretch reads STQALTYLNALQHAIRLT. The disordered stretch occupies residues 929 to 972; that stretch reads HSDADSSKPSSKSVSETNSPAVCQDQKDEEDDGKASTQPLLKKE. A compositionally biased stretch (low complexity) spans 935 to 948; it reads SKPSSKSVSETNSP. Thr-1114 is modified (phosphothreonine).

This sequence belongs to the SLC12A transporter family. In terms of assembly, homodimer. Post-translationally, phosphorylated at Thr-175, Thr-179 and Thr-184 by OXSR1/OSR1 and STK39/SPAK downstream of WNK kinases (WNK1, WNK2, WNK3 or WNK4), promoting its activity. Strongly expressed in rectal gland, brain, gill and intestine. Also detected at lower levels in heart, kidney, and testis.

The protein resides in the basolateral cell membrane. It carries out the reaction K(+)(out) + 2 chloride(out) + Na(+)(out) = K(+)(in) + 2 chloride(in) + Na(+)(in). Its activity is regulated as follows. Activated following phosphorylation by OXSR1/OSR1 and STK39/SPAK. Inhibited by bumetanide. Cation-chloride cotransporter which mediates the electroneutral transport of chloride, potassium and/or sodium ions across the membrane. Plays a vital role in the regulation of ionic balance and cell volume. This is Solute carrier family 12 member 2 (SLC12A2) from Squalus acanthias (Spiny dogfish).